The chain runs to 580 residues: Isocitrate lyase (580 aa).

Residue 106 to 108 coordinates substrate; sequence SGW. Position 177 (Asp-177) interacts with Mg(2+). Catalysis depends on Cys-215, which acts as the Proton acceptor. Residues 216–217, Arg-252, 441–445, and Thr-476 each bind substrate; these read GH and NLSPS. Residues 578–580 carry the Microbody targeting signal motif; sequence SRM.

Belongs to the isocitrate lyase/PEP mutase superfamily. Isocitrate lyase family. As to quaternary structure, homotetramer. Mg(2+) serves as cofactor.

The protein localises to the glyoxysome. It catalyses the reaction D-threo-isocitrate = glyoxylate + succinate. It participates in carbohydrate metabolism; glyoxylate cycle; (S)-malate from isocitrate: step 1/2. Its function is as follows. Involved in storage lipid mobilization during the growth of higher plant seedling. This is Isocitrate lyase (ICL 8) from Pinus taeda (Loblolly pine).